Reading from the N-terminus, the 236-residue chain is Purine nucleoside phosphorylase DeoD-type (236 aa).

His4 is a binding site for a purine D-ribonucleoside. Residues Gly20, Arg24, Arg43, and 87-90 (RVGT) each bind phosphate. A purine D-ribonucleoside-binding positions include 179 to 181 (EME) and 203 to 204 (SD). The active-site Proton donor is Asp204.

The protein belongs to the PNP/UDP phosphorylase family. In terms of assembly, homohexamer; trimer of homodimers.

The enzyme catalyses a purine D-ribonucleoside + phosphate = a purine nucleobase + alpha-D-ribose 1-phosphate. It catalyses the reaction a purine 2'-deoxy-D-ribonucleoside + phosphate = a purine nucleobase + 2-deoxy-alpha-D-ribose 1-phosphate. Catalyzes the reversible phosphorolytic breakdown of the N-glycosidic bond in the beta-(deoxy)ribonucleoside molecules, with the formation of the corresponding free purine bases and pentose-1-phosphate. The polypeptide is Purine nucleoside phosphorylase DeoD-type (Streptococcus pneumoniae (strain CGSP14)).